Reading from the N-terminus, the 406-residue chain is Probable transcription factor FPSE_09188 (406 aa).

A disordered region spans residues Met-1 to Gly-72. Positions Ala-7 to Ser-20 are enriched in low complexity.

This sequence belongs to the bZIP family.

It is found in the nucleus. Its function is as follows. The two putative transcription factors FPSE_09188 and FPSE_09189 could be responsible for orchestrating expression of the W493 A and B biosynthesis cluster genes. W493 A and B consist of six amino acid residues D-allo-thr, L-Ala, D-Ala, L-Gln, D-Tyr, and L-Val/L-Ile linked to a 3-hydroxy-4-methyltetradecanoic acid polyketide chain. The sequence is that of Probable transcription factor FPSE_09188 from Fusarium pseudograminearum (strain CS3096) (Wheat and barley crown-rot fungus).